The following is a 238-amino-acid chain: Large ribosomal subunit protein uL2 (238 aa).

The interval 199–238 (PHGGGLHQSVSRPSTVSRNAPPGRKVGHIAARRTGRKEGA) is disordered. Positions 206 to 216 (QSVSRPSTVSR) are enriched in polar residues. Positions 223–238 (KVGHIAARRTGRKEGA) are enriched in basic residues.

Belongs to the universal ribosomal protein uL2 family. Part of the 50S ribosomal subunit. Forms a bridge to the 30S subunit in the 70S ribosome.

Its function is as follows. One of the primary rRNA binding proteins. Required for association of the 30S and 50S subunits to form the 70S ribosome, for tRNA binding and peptide bond formation. It has been suggested to have peptidyltransferase activity; this is somewhat controversial. Makes several contacts with the 16S rRNA in the 70S ribosome. This is Large ribosomal subunit protein uL2 from Sulfurisphaera tokodaii (strain DSM 16993 / JCM 10545 / NBRC 100140 / 7) (Sulfolobus tokodaii).